We begin with the raw amino-acid sequence, 2072 residues long: Protein still life, isoform SIF type 1 (2072 aa).

The N-myristoyl glycine moiety is linked to residue Gly-2. Residues 29–147 (RRDGHLLSSF…ECCSPSFKFS (119 aa)) enclose the WH1 domain. 7 disordered regions span residues 153–188 (SYSLKLDPPGKGKVKAKRKPLSTPASPSRVRQEPQC), 245–284 (DNVASGGPGTNQGADTLPRQMKGGQQDRQDVANSGVNTNT), 327–355 (EGTQAGGGLHQSVGTCTSSSKGTGTRNKD), 459–486 (NNTMGRASSQSSRFSGSRSSHEIGRGYP), 502–576 (EGSP…SPTS), 618–655 (AKSSTLPLPPHRPLSTIRDKERDRDRDGYYSDRNELIR), and 699–747 (SGSS…YKSA). Residues 275–284 (VANSGVNTNT) are compositionally biased toward polar residues. Low complexity-rich tracts occupy residues 338–351 (SVGTCTSSSKGTGT), 459–476 (NNTMGRASSQSSRFSGSR), and 522–553 (SSSNGNSDQDQSYGQQQSSGQHPQQQQGPPQR). Residues 564–576 (APNVTPTPGSPTS) are compositionally biased toward polar residues. Residues 634 to 655 (IRDKERDRDRDGYYSDRNELIR) are compositionally biased toward basic and acidic residues. A compositionally biased stretch (polar residues) spans 732-743 (SLRQDSSLNDSG). One can recognise a PH domain in the interval 840 to 958 (TGAVRKAGFL…SIHSACAAAF (119 aa)). A disordered region spans residues 1088-1119 (GRGATKRRPPMLSRSNSGSSRRSMQMNSRDEP). Positions 1100–1114 (SRSNSGSSRRSMQMN) are enriched in low complexity. An RBD domain is found at 1121-1188 (KTFKVAMPDN…PHRNDLIENY (68 aa)). One can recognise a PDZ domain in the interval 1204–1293 (QVELQRTTLE…LSMMMRSSRT (90 aa)). A disordered region spans residues 1403–1424 (AEQETRKSSPTGSVTSSVSTTA). Positions 1410–1424 (SSPTGSVTSSVSTTA) are enriched in low complexity. The region spanning 1436–1630 (KLRKVVMELV…EKVAEHINEM (195 aa)) is the DH domain. Disordered regions lie at residues 1803–1832 (MKNFGGSSGSVSGHSSQGMGSMGYPGNSQT), 1844–2039 (HGSH…YQPV), and 2051–2072 (PRDMINLGTDPQSTTRKDDVKN). Low complexity-rich tracts occupy residues 1811–1821 (GSVSGHSSQGM) and 1926–1943 (QQQQQQQQQQQQLMQQGH). Residues 1970–1984 (HSSDIERIDPGTKSE) are compositionally biased toward basic and acidic residues. Low complexity predominate over residues 2007-2022 (LTLSTTSTLSVGSTGS). Polar residues predominate over residues 2023 to 2032 (QARLIQSSHP).

Expressed in both larval and adult brains, mainly in a subset of neurons but not in glia. In the adult eye is expressed in the two primary pigment cells in the subapical region of the eye. Also present in photoreceptors.

The protein resides in the synapse. Regulates synaptic differentiation through the organization of actin cytoskeleton possibly by activating Rho-like GTPases. Is likely a factor in the cascade of Rac1 or Cdc42 in the neurons. May play a role in maintaining proper septate junction functions. Required for eye development and most likely affects corneal lens-formation. The sequence is that of Protein still life, isoform SIF type 1 (sif) from Drosophila melanogaster (Fruit fly).